The sequence spans 165 residues: Large ribosomal subunit protein bL17 (165 aa).

Positions 138–158 (QEKREAQEKAREEKRTARKSD) are enriched in basic and acidic residues. Positions 138-165 (QEKREAQEKAREEKRTARKSDSVPARKK) are disordered.

It belongs to the bacterial ribosomal protein bL17 family. In terms of assembly, part of the 50S ribosomal subunit. Contacts protein L32.

The polypeptide is Large ribosomal subunit protein bL17 (Leptospira borgpetersenii serovar Hardjo-bovis (strain JB197)).